The following is a 127-amino-acid chain: Large ribosomal subunit protein bL20 (127 aa).

The protein belongs to the bacterial ribosomal protein bL20 family.

Binds directly to 23S ribosomal RNA and is necessary for the in vitro assembly process of the 50S ribosomal subunit. It is not involved in the protein synthesizing functions of that subunit. This is Large ribosomal subunit protein bL20 (rplT) from Mycoplasma pneumoniae (strain ATCC 29342 / M129 / Subtype 1) (Mycoplasmoides pneumoniae).